The sequence spans 354 residues: Lysophosphatidic acid receptor 3 (354 aa).

The Extracellular segment spans residues Met-1–Val-31. The N-linked (GlcNAc...) asparagine glycan is linked to Asn-15. Residues Ile-32–Ile-52 form a helical membrane-spanning segment. Topologically, residues Ala-53–Tyr-67 are cytoplasmic. Residues Leu-68–Phe-88 form a helical membrane-spanning segment. Residues Asn-89 to Arg-101 are Extracellular-facing. Residues Trp-102–Ala-124 form a helical membrane-spanning segment. Residues Val-125–Thr-146 are Cytoplasmic-facing. Residues Leu-147 to Trp-167 form a helical membrane-spanning segment. Over Asn-168 to Ser-186 the chain is Extracellular. A glycan (N-linked (GlcNAc...) asparagine) is linked at Asn-172. A helical transmembrane segment spans residues Tyr-187–Val-207. The Cytoplasmic portion of the chain corresponds to Arg-208–Thr-240. A helical transmembrane segment spans residues Val-241 to Leu-261. The Extracellular segment spans residues Asp-262–Arg-276. Residues Trp-277 to Tyr-295 traverse the membrane as a helical segment. Residues Lys-296–Ser-354 are Cytoplasmic-facing. Cys-309 carries the S-palmitoyl cysteine lipid modification.

Belongs to the G-protein coupled receptor 1 family.

It is found in the cell membrane. Its function is as follows. Receptor for lysophosphatidic acid (LPA), a mediator of diverse cellular activities. Seems to be coupled to the G(i)/G(o) and G(q) families of heteromeric G proteins. In Rattus norvegicus (Rat), this protein is Lysophosphatidic acid receptor 3 (Lpar3).